The sequence spans 138 residues: Photosystem II extrinsic protein U (138 aa).

The first 28 residues, 1 to 28, serve as a signal peptide directing secretion; the sequence is MSRVVSALMGLVLMFGCAFFSVQPQAQA. The propeptide occupies 29 to 42; the sequence is LDLSNGFVSAAVLG.

The protein belongs to the PsbU family. In terms of assembly, PSII is composed of 1 copy each of membrane proteins PsbA, PsbB, PsbC, PsbD, PsbE, PsbF, PsbH, PsbI, PsbJ, PsbK, PsbL, PsbM, PsbT, PsbX, PsbY, PsbZ, Psb30/Ycf12, peripheral proteins PsbO, CyanoQ (PsbQ), PsbU, PsbV and a large number of cofactors. It forms dimeric complexes.

The protein resides in the cellular thylakoid membrane. In terms of biological role, one of the extrinsic, lumenal subunits of photosystem II (PSII). PSII is a light-driven water plastoquinone oxidoreductase, using light energy to abstract electrons from H(2)O, generating a proton gradient subsequently used for ATP formation. The extrinsic proteins stabilize the structure of photosystem II oxygen-evolving complex (OEC), the ion environment of oxygen evolution and protect the OEC against heat-induced inactivation. This is Photosystem II extrinsic protein U from Picosynechococcus sp. (strain ATCC 27264 / PCC 7002 / PR-6) (Agmenellum quadruplicatum).